A 217-amino-acid polypeptide reads, in one-letter code: Protein-L-isoaspartate O-methyltransferase (217 aa).

Ser-67 is an active-site residue.

Belongs to the methyltransferase superfamily. L-isoaspartyl/D-aspartyl protein methyltransferase family.

It localises to the cytoplasm. It carries out the reaction [protein]-L-isoaspartate + S-adenosyl-L-methionine = [protein]-L-isoaspartate alpha-methyl ester + S-adenosyl-L-homocysteine. Catalyzes the methyl esterification of L-isoaspartyl residues in peptides and proteins that result from spontaneous decomposition of normal L-aspartyl and L-asparaginyl residues. It plays a role in the repair and/or degradation of damaged proteins. In Azoarcus sp. (strain BH72), this protein is Protein-L-isoaspartate O-methyltransferase.